A 113-amino-acid chain; its full sequence is UPF0102 protein Shal_4069 (113 aa).

Belongs to the UPF0102 family.

The sequence is that of UPF0102 protein Shal_4069 from Shewanella halifaxensis (strain HAW-EB4).